Consider the following 330-residue polypeptide: MVLMVEGISKDYREFHLRDVTFSVEKGEHFIILGPSGAGKTVLLEVIAGIIEPDSGRIFLNGEDITDLPPEKRGLAYIPQNYALFPNMSVFDNIAFGLKVRKVPKAEIGRKVRELSEVLGISHLLKRKPKTLSGGEMQRVAIARALAVEPELLLLDEPFANLDVQTRGRLINEMKRWRKELGFTALHVTHSFEEAVSLGDRVGVMLNGRLVQVGPVREVFSRPASEEVAKFLGFENIVEGLAEGRILRANGLVIELPIEASGRIRVGIRPEDIVLSDEPLKSSMRNTFQAEVQADVEELGELGPRTRKAKGRWSGAFSIRYPLFGAGAGA.

The ABC transporter domain maps to 3 to 232 (LMVEGISKDY…PASEEVAKFL (230 aa)). 34-41 (GPSGAGKT) lines the ATP pocket.

The protein belongs to the ABC transporter superfamily. Sulfate/tungstate importer (TC 3.A.1.6) family. In terms of assembly, the complex is composed of two ATP-binding proteins (WtpC), two transmembrane proteins (WtpB) and a solute-binding protein (WtpA).

The protein localises to the cell membrane. The enzyme catalyses tungstate(in) + ATP + H2O = tungstate(out) + ADP + phosphate + H(+). Functionally, part of the ABC transporter complex WtpABC involved in molybdate/tungstate import. Responsible for energy coupling to the transport system. This Thermococcus kodakarensis (strain ATCC BAA-918 / JCM 12380 / KOD1) (Pyrococcus kodakaraensis (strain KOD1)) protein is Molybdate/tungstate import ATP-binding protein WtpC (wtpC).